A 394-amino-acid chain; its full sequence is NAD(P)H-quinone oxidoreductase subunit H (394 aa).

This sequence belongs to the complex I 49 kDa subunit family. In terms of assembly, NDH-1 can be composed of about 15 different subunits; different subcomplexes with different compositions have been identified which probably have different functions.

The protein localises to the cellular thylakoid membrane. It catalyses the reaction a plastoquinone + NADH + (n+1) H(+)(in) = a plastoquinol + NAD(+) + n H(+)(out). It carries out the reaction a plastoquinone + NADPH + (n+1) H(+)(in) = a plastoquinol + NADP(+) + n H(+)(out). NDH-1 shuttles electrons from an unknown electron donor, via FMN and iron-sulfur (Fe-S) centers, to quinones in the respiratory and/or the photosynthetic chain. The immediate electron acceptor for the enzyme in this species is believed to be plastoquinone. Couples the redox reaction to proton translocation, and thus conserves the redox energy in a proton gradient. Cyanobacterial NDH-1 also plays a role in inorganic carbon-concentration. This is NAD(P)H-quinone oxidoreductase subunit H from Nostoc sp. (strain PCC 7120 / SAG 25.82 / UTEX 2576).